The chain runs to 294 residues: Pyridoxal 5'-phosphate synthase subunit PdxS (294 aa).

Aspartate 24 serves as a coordination point for D-ribose 5-phosphate. The Schiff-base intermediate with D-ribose 5-phosphate role is filled by lysine 81. Glycine 153 is a D-ribose 5-phosphate binding site. Arginine 165 provides a ligand contact to D-glyceraldehyde 3-phosphate. D-ribose 5-phosphate-binding positions include glycine 214 and glycine 235 to serine 236.

It belongs to the PdxS/SNZ family. In terms of assembly, in the presence of PdxT, forms a dodecamer of heterodimers.

The enzyme catalyses aldehydo-D-ribose 5-phosphate + D-glyceraldehyde 3-phosphate + L-glutamine = pyridoxal 5'-phosphate + L-glutamate + phosphate + 3 H2O + H(+). Its pathway is cofactor biosynthesis; pyridoxal 5'-phosphate biosynthesis. Catalyzes the formation of pyridoxal 5'-phosphate from ribose 5-phosphate (RBP), glyceraldehyde 3-phosphate (G3P) and ammonia. The ammonia is provided by the PdxT subunit. Can also use ribulose 5-phosphate and dihydroxyacetone phosphate as substrates, resulting from enzyme-catalyzed isomerization of RBP and G3P, respectively. The sequence is that of Pyridoxal 5'-phosphate synthase subunit PdxS from Bacillus velezensis (strain DSM 23117 / BGSC 10A6 / LMG 26770 / FZB42) (Bacillus amyloliquefaciens subsp. plantarum).